The sequence spans 852 residues: GPI ethanolamine phosphate transferase 2 (852 aa).

Residues asparagine 191 and asparagine 420 are each glycosylated (N-linked (GlcNAc...) asparagine). 3 helical membrane-spanning segments follow: residues 458–478 (LIRLYVGLSISGFAISLTFFP), 486–506 (FAPAGMFLGFSILSYSTMMFA), and 516–536 (FWYWISMGWVVYLHVKYAGHF). A glycan (N-linked (GlcNAc...) asparagine) is linked at asparagine 576. The next 6 helical transmembrane spans lie at 632-652 (LLYHARMVLCGISLLMIYSLY), 676-696 (TLTLFLLMQSKVTNIPAFLVF), 714-734 (TITSLLMQYVTFYAFGGSNAI), 750-770 (SVFIVGALTFISNWAAPIWWV), 787-807 (AHVTILTLHMATILMSVMAAC), and 824-844 (YLYTIAWAMINHIVVNVLGEI).

Belongs to the PIGG/PIGN/PIGO family. PIGG subfamily.

It is found in the endoplasmic reticulum membrane. The protein operates within glycolipid biosynthesis; glycosylphosphatidylinositol-anchor biosynthesis. Ethanolamine phosphate transferase involved in glycosylphosphatidylinositol-anchor biosynthesis. Transfers ethanolamine phosphate to the GPI second mannose. In Aspergillus oryzae (strain ATCC 42149 / RIB 40) (Yellow koji mold), this protein is GPI ethanolamine phosphate transferase 2 (las21).